The sequence spans 852 residues: Leucine--tRNA ligase (852 aa).

The 'HIGH' region signature appears at 41-51; the sequence is PYPSGRIHIGH. The 'KMSKS' region motif lies at 623 to 627; the sequence is KMSKS. ATP is bound at residue Lys626.

It belongs to the class-I aminoacyl-tRNA synthetase family.

It is found in the cytoplasm. It catalyses the reaction tRNA(Leu) + L-leucine + ATP = L-leucyl-tRNA(Leu) + AMP + diphosphate. This is Leucine--tRNA ligase from Ruegeria pomeroyi (strain ATCC 700808 / DSM 15171 / DSS-3) (Silicibacter pomeroyi).